The primary structure comprises 567 residues: Hydroxylamine reductase 2 (567 aa).

[4Fe-4S] cluster contacts are provided by C5, C8, C17, and C23. Positions 262, 286, 330, 421, 449, 474, 509, and 511 each coordinate hybrid [4Fe-2O-2S] cluster. C421 bears the Cysteine persulfide mark.

The protein belongs to the HCP family. The cofactor is [4Fe-4S] cluster. It depends on hybrid [4Fe-2O-2S] cluster as a cofactor.

The protein resides in the cytoplasm. The catalysed reaction is A + NH4(+) + H2O = hydroxylamine + AH2 + H(+). Functionally, catalyzes the reduction of hydroxylamine to form NH(3) and H(2)O. The polypeptide is Hydroxylamine reductase 2 (Clostridium acetobutylicum (strain ATCC 824 / DSM 792 / JCM 1419 / IAM 19013 / LMG 5710 / NBRC 13948 / NRRL B-527 / VKM B-1787 / 2291 / W)).